A 237-amino-acid polypeptide reads, in one-letter code: MMSASPPHLLIVDDDERIRGLLQKFLIRNGFLVTAGRDAAHARRLLSGLEFNLIVLDVMMPGEDGLSLTRDLRTKMATPILLLTARGETRERIEGLEAGADDYLPKPFEPKELLLRINAILRRVPEAVTAGPKYLSLGPLRYDLDRGELSQGDQPVRLTATEAALMRIFAAHAGEVIGRTELIEELGRDRSASAEEAAGDRAVDVQITRLRRKIEPDPREPRYLQTVRGLGYMLAPD.

The region spanning 8–121 (HLLIVDDDER…ELLLRINAIL (114 aa)) is the Response regulatory domain. Asp-57 is modified (4-aspartylphosphate). Positions 77–95 (ATPILLLTARGETRERIEG) form a DNA-binding region, H-T-H motif. Positions 132–236 (PKYLSLGPLR…VRGLGYMLAP (105 aa)) form a DNA-binding region, ompR/PhoB-type.

In terms of biological role, necessary for photosynthetic and respiratory growth. Probable promoter-specific protein mediating the interaction between DNA and RNA polymerase. This is Protein PetR (petR) from Rhodobacter capsulatus (strain ATCC BAA-309 / NBRC 16581 / SB1003).